The chain runs to 2090 residues: Host cell factor 1 (2090 aa).

Alanine 2 is modified (N-acetylalanine). Serine 6 carries the post-translational modification Phosphoserine. 5 Kelch repeats span residues 44 to 89 (LIVV…GFVC), 93 to 140 (RLLV…RLGH), 148 to 194 (KCYL…ITYG), 217 to 265 (KLVI…TIGN), and 266 to 313 (KMYV…LMDT). Glycyl lysine isopeptide (Lys-Gly) (interchain with G-Cter in ubiquitin) cross-links involve residues lysine 105, lysine 163, and lysine 244. Lysine 282 is covalently cross-linked (Glycyl lysine isopeptide (Lys-Gly) (interchain with G-Cter in SUMO2)). Residue lysine 288 is modified to N6-acetyllysine. A Glycyl lysine isopeptide (Lys-Gly) (interchain with G-Cter in ubiquitin) cross-link involves residue lysine 363. The region spanning 366 to 469 (PPARVQLVRA…TIQVLPTVPG (104 aa)) is the Fibronectin type-III 1 domain. The segment at 407 to 434 (ATATSPTPNPVPSVPANPPKSPAPAAAA) is disordered. Position 411 is a phosphoserine (serine 411). Pro residues predominate over residues 413–428 (TPNPVPSVPANPPKSP). The interval 500–550 (LVTMRPAGQAGKAPVTVTSLPASVRMVVPTQSAQGTVIGSNPQMSGMAALA) is required for interaction with OGT. An omega-N-methylarginine mark is found at arginine 504 and arginine 524. Residues serine 598, serine 666, and serine 669 each carry the phosphoserine modification. Residues 610-722 (LKTAAAQVGT…KGPLPAGTIL (113 aa)) form an interaction with SIN3A region. An interaction with ZBTB17 region spans residues 750–902 (ILGISSVSPS…SLAGAGAHST (153 aa)). Lysine 813 is subject to N6-acetyllysine. The tract at residues 813–912 (KIITAVPKIA…SASLATPITT (100 aa)) is interaction with GABP2. HCF repeat repeat units lie at residues 1010–1035 (TLVC…TVVA), 1072–1097 (VRVC…ATSN), and 1101–1126 (QHGC…AMSS). The tract at residues 1098–1140 (MAGQHGCSNPPCETHETGTTSTATTAMSSMGTGQQRDTRHTSS) is disordered. Positions 1114-1130 (TGTTSTATTAMSSMGTG) are enriched in low complexity. Residues 1157 to 1182 (TQGTVKPQCQTQQANMTNTTMTVQAT) form an HCF repeat 4; degenerate repeat. Phosphoserine is present on serine 1204. Residue arginine 1216 is modified to Asymmetric dimethylarginine. Position 1223 is a phosphoserine (serine 1223). HCF repeat repeat units lie at residues 1295-1320 (TQVC…SNAG) and 1323-1348 (QRVC…ATSN). Disordered stretches follow at residues 1302 to 1374 (PCET…TTST) and 1444 to 1486 (TVTS…TTVS). The segment covering 1308–1321 (TGTTNTATTSNAGS) has biased composition (low complexity). Residues 1358-1383 (QQPAGGRPCETHQTTSTGTTMSVSVG) form an HCF repeat 7; degenerate repeat. Residues 1423–1448 (QRVCSNPPCETHETGTTHTATTVTSN) form an HCF repeat 8 repeat. Polar residues predominate over residues 1465–1475 (VVSTQGDSANI). Over residues 1476-1486 (TSSSGITTTVS) the composition is skewed to low complexity. Threonine 1500 carries the post-translational modification Phosphothreonine. Phosphoserine is present on residues serine 1506, serine 1559, and serine 1826. 2 Fibronectin type-III domains span residues 1853–1943 (PPPP…TCLP) and 1945–2061 (FPGA…TSKD). Residues lysine 1862 and lysine 1863 each participate in a glycyl lysine isopeptide (Lys-Gly) (interchain with G-Cter in ubiquitin) cross-link. Position 1893 is a phosphoserine (serine 1893). Residues 2049-2090 (ATQVRWLQETSKDSSGTKPASKRPMSSPEMKSAPKKSKADGQ) form a disordered region. Lysine 2060 is modified (N6-acetyllysine). Residue lysine 2079 forms a Glycyl lysine isopeptide (Lys-Gly) (interchain with G-Cter in SUMO2) linkage.

Composed predominantly of six polypeptides ranging from 110 to 150 kDa and a minor 300 kDa polypeptide. The majority of N- and C-terminal cleavage products remain tightly, albeit non-covalently, associated. Interacts with POU2F1, CREB3, ZBTB17, EGR2, E2F4, CREBZF, SP1, GABP2, Sin3 HDAC complex (SIN3A, HDAC1, HDAC2, SUDS3), SAP30, SIN3B and FHL2. Component of a MLL1 complex, composed of at least the core components KMT2A/MLL1, ASH2L, HCFC1, WDR5 and RBBP5, as well as the facultative components BACC1, CHD8, DPY30, E2F6, HCFC2, HSP70, INO80C, KANSL1, LAS1L, MAX, MCRS1, MEN1, MGA, KAT8, PELP1, PHF20, PRP31, RING2, RUVBL1, RUVBL2, SENP3, TAF1, TAF4, TAF6, TAF7, TAF9 and TEX10. Component of a THAP1/THAP3-HCFC1-OGT complex that is required for the regulation of the transcriptional activity of RRM1. Interacts directly with THAP3 (via its HBM). Interacts (via the Kelch-repeat domain) with THAP1 (via the HBM); the interaction recruits HCHC1 to the RRM1. Interacts directly with OGT; the interaction, which requires the HCFC1 cleavage site domain, glycosylates and promotes the proteolytic processing of HCFC1 and retains OGT in the nucleus. Component of the SET1 complex, at least composed of the catalytic subunit (SETD1A or SETD1B), WDR5, WDR82, RBBP5, ASH2L, CXXC1, HCFC1 and DPY30. Component of the NSL complex at least composed of MOF/KAT8, KANSL1, KANSL2, KANSL3, MCRS1, PHF20, OGT1/OGT, WDR5 and HCFC1. Component of a complex at least composed of ZNF335, HCFC1, CCAR2, EMSY, MKI67, RBBP5, ASH2L and WDR5; the complex is formed as a result of interactions between components of a nuclear receptor-mediated transcription complex and a histone methylation complex. Within the complex interacts with ZNF335. Interacts with TET2 and TET3. Interacts with HCFC1R1. Interacts with THAP11. Interacts (via Kelch domain) with KMT2E (via HBM motif). Interacts with E2F1. Accessory scaffold component of the polycomb repressive deubiquitinase (PR-DUB) complex, at least composed of BAP1, one of ASXL1, ASXL2 or (probably) ASXL3 and one of MBD5 or MBD6; the PR-DUB core associates with a number of accessory proteins, including FOXK1, FOXK2, KDM1B, HCFC1, YY1 and OGT. Interacts with YY1 (via Gly-rich region); the interaction is direct. Interacts with BAP1 (via HBM-like motif). Post-translationally, proteolytically cleaved at one or several PPCE--THET sites within the HCF repeats. Cleavage is promoted by O-glycosylation. Further cleavage of the primary N- and C-terminal chains results in a 'trimming' and accumulation of the smaller chains. Cleavage is promoted by O-glycosylation. In terms of processing, O-glycosylated. GlcNAcylation by OGT promotes proteolytic processing. Ubiquitinated. Lys-1862 and Lys-1863 are ubiquitinated both via 'Lys-48'- and 'Lys-63'-linked polyubiquitin chains. BAP1 mediated deubiquitination of 'Lys-48'-linked polyubiquitin chains; deubiquitination by BAP1 does not seem to stabilize the protein.

Its subcellular location is the cytoplasm. It is found in the nucleus. Its function is as follows. Transcriptional coregulator. Serves as a scaffold protein, bridging interactions between transcription factors, including THAP11 and ZNF143, and transcriptional coregulators. Involved in control of the cell cycle. Also antagonizes transactivation by ZBTB17 and GABP2; represses ZBTB17 activation of the p15(INK4b) promoter and inhibits its ability to recruit p300. Coactivator for EGR2 and GABP2. Tethers the chromatin modifying Set1/Ash2 histone H3 'Lys-4' methyltransferase (H3K4me) and Sin3 histone deacetylase (HDAC) complexes (involved in the activation and repression of transcription respectively) together. As part of the NSL complex it may be involved in acetylation of nucleosomal histone H4 on several lysine residues. Recruits KMT2E to E2F1 responsive promoters promoting transcriptional activation and thereby facilitates G1 to S phase transition. Modulates expression of homeobox protein PDX1, perhaps acting in concert with transcription factor E2F1, thereby regulating pancreatic beta-cell growth and glucose-stimulated insulin secretion. May negatively modulate transcriptional activity of FOXO3. This Mesocricetus auratus (Golden hamster) protein is Host cell factor 1.